A 254-amino-acid polypeptide reads, in one-letter code: Imidazole glycerol phosphate synthase subunit HisF (254 aa).

Catalysis depends on residues Asp11 and Asp130.

It belongs to the HisA/HisF family. In terms of assembly, heterodimer of HisH and HisF.

The protein localises to the cytoplasm. The catalysed reaction is 5-[(5-phospho-1-deoxy-D-ribulos-1-ylimino)methylamino]-1-(5-phospho-beta-D-ribosyl)imidazole-4-carboxamide + L-glutamine = D-erythro-1-(imidazol-4-yl)glycerol 3-phosphate + 5-amino-1-(5-phospho-beta-D-ribosyl)imidazole-4-carboxamide + L-glutamate + H(+). The protein operates within amino-acid biosynthesis; L-histidine biosynthesis; L-histidine from 5-phospho-alpha-D-ribose 1-diphosphate: step 5/9. Its function is as follows. IGPS catalyzes the conversion of PRFAR and glutamine to IGP, AICAR and glutamate. The HisF subunit catalyzes the cyclization activity that produces IGP and AICAR from PRFAR using the ammonia provided by the HisH subunit. The sequence is that of Imidazole glycerol phosphate synthase subunit HisF from Chromobacterium violaceum (strain ATCC 12472 / DSM 30191 / JCM 1249 / CCUG 213 / NBRC 12614 / NCIMB 9131 / NCTC 9757 / MK).